The chain runs to 260 residues: Hydroxyacylglutathione hydrolase (260 aa).

The Zn(2+) site is built by His-55, His-57, Asp-59, His-60, His-116, Asp-133, and His-171.

This sequence belongs to the metallo-beta-lactamase superfamily. Glyoxalase II family. Monomer. Requires Zn(2+) as cofactor.

It catalyses the reaction an S-(2-hydroxyacyl)glutathione + H2O = a 2-hydroxy carboxylate + glutathione + H(+). Its pathway is secondary metabolite metabolism; methylglyoxal degradation; (R)-lactate from methylglyoxal: step 2/2. In terms of biological role, thiolesterase that catalyzes the hydrolysis of S-D-lactoyl-glutathione to form glutathione and D-lactic acid. The chain is Hydroxyacylglutathione hydrolase from Shewanella loihica (strain ATCC BAA-1088 / PV-4).